Reading from the N-terminus, the 214-residue chain is Nucleoside triphosphate pyrophosphatase (214 aa).

The Proton acceptor role is filled by D79.

The protein belongs to the Maf family. It depends on a divalent metal cation as a cofactor.

It is found in the cytoplasm. The catalysed reaction is a ribonucleoside 5'-triphosphate + H2O = a ribonucleoside 5'-phosphate + diphosphate + H(+). It carries out the reaction a 2'-deoxyribonucleoside 5'-triphosphate + H2O = a 2'-deoxyribonucleoside 5'-phosphate + diphosphate + H(+). Its function is as follows. Nucleoside triphosphate pyrophosphatase. May have a dual role in cell division arrest and in preventing the incorporation of modified nucleotides into cellular nucleic acids. The sequence is that of Nucleoside triphosphate pyrophosphatase from Rhodococcus opacus (strain B4).